Consider the following 356-residue polypeptide: S-adenosylmethionine:tRNA ribosyltransferase-isomerase (356 aa).

Belongs to the QueA family. In terms of assembly, monomer.

It localises to the cytoplasm. The enzyme catalyses 7-aminomethyl-7-carbaguanosine(34) in tRNA + S-adenosyl-L-methionine = epoxyqueuosine(34) in tRNA + adenine + L-methionine + 2 H(+). Its pathway is tRNA modification; tRNA-queuosine biosynthesis. Transfers and isomerizes the ribose moiety from AdoMet to the 7-aminomethyl group of 7-deazaguanine (preQ1-tRNA) to give epoxyqueuosine (oQ-tRNA). The protein is S-adenosylmethionine:tRNA ribosyltransferase-isomerase of Escherichia coli (strain ATCC 8739 / DSM 1576 / NBRC 3972 / NCIMB 8545 / WDCM 00012 / Crooks).